Consider the following 434-residue polypeptide: Enolase (434 aa).

A (2R)-2-phosphoglycerate-binding site is contributed by Gln-166. Residue Glu-208 is the Proton donor of the active site. Residues Asp-245, Glu-290, and Asp-317 each coordinate Mg(2+). (2R)-2-phosphoglycerate contacts are provided by Lys-342, Arg-371, Ser-372, and Lys-393. The Proton acceptor role is filled by Lys-342.

This sequence belongs to the enolase family. It depends on Mg(2+) as a cofactor.

The protein localises to the cytoplasm. Its subcellular location is the secreted. The protein resides in the cell surface. The catalysed reaction is (2R)-2-phosphoglycerate = phosphoenolpyruvate + H2O. It participates in carbohydrate degradation; glycolysis; pyruvate from D-glyceraldehyde 3-phosphate: step 4/5. In terms of biological role, catalyzes the reversible conversion of 2-phosphoglycerate (2-PG) into phosphoenolpyruvate (PEP). It is essential for the degradation of carbohydrates via glycolysis. This is Enolase from Caldicellulosiruptor saccharolyticus (strain ATCC 43494 / DSM 8903 / Tp8T 6331).